A 75-amino-acid polypeptide reads, in one-letter code: Putative sulfur carrier protein TsuB (75 aa).

The Cysteine persulfide intermediate role is filled by C13.

It belongs to the sulfur carrier protein TusA family.

Functionally, involved in thiosulfate metabolism. The chain is Putative sulfur carrier protein TsuB from Escherichia coli (strain K12).